The chain runs to 379 residues: Queuine tRNA-ribosyltransferase (379 aa).

The active-site Proton acceptor is D94. Substrate is bound by residues 94-98 (DSGGF), D148, Q191, and G218. The interval 249-255 (GVGSPDA) is RNA binding. Catalysis depends on D268, which acts as the Nucleophile. Residues 273-277 (TRIAR) are RNA binding; important for wobble base 34 recognition. Positions 306, 308, 311, and 337 each coordinate Zn(2+).

Belongs to the queuine tRNA-ribosyltransferase family. In terms of assembly, homodimer. Within each dimer, one monomer is responsible for RNA recognition and catalysis, while the other monomer binds to the replacement base PreQ1. The cofactor is Zn(2+).

It carries out the reaction 7-aminomethyl-7-carbaguanine + guanosine(34) in tRNA = 7-aminomethyl-7-carbaguanosine(34) in tRNA + guanine. Its pathway is tRNA modification; tRNA-queuosine biosynthesis. Its function is as follows. Catalyzes the base-exchange of a guanine (G) residue with the queuine precursor 7-aminomethyl-7-deazaguanine (PreQ1) at position 34 (anticodon wobble position) in tRNAs with GU(N) anticodons (tRNA-Asp, -Asn, -His and -Tyr). Catalysis occurs through a double-displacement mechanism. The nucleophile active site attacks the C1' of nucleotide 34 to detach the guanine base from the RNA, forming a covalent enzyme-RNA intermediate. The proton acceptor active site deprotonates the incoming PreQ1, allowing a nucleophilic attack on the C1' of the ribose to form the product. After dissociation, two additional enzymatic reactions on the tRNA convert PreQ1 to queuine (Q), resulting in the hypermodified nucleoside queuosine (7-(((4,5-cis-dihydroxy-2-cyclopenten-1-yl)amino)methyl)-7-deazaguanosine). The protein is Queuine tRNA-ribosyltransferase of Oceanobacillus iheyensis (strain DSM 14371 / CIP 107618 / JCM 11309 / KCTC 3954 / HTE831).